The chain runs to 436 residues: Carboxypeptidase A5 (436 aa).

The first 33 residues, 1 to 33, serve as a signal peptide directing secretion; that stretch reads MQGTPGGGTRPGPSPVDRRTLLVFSFILAAALG. A propeptide spans 34-126 (activation peptide); sequence QMNFTGDQVL…ERQAMAKSRR (93 aa). The Peptidase M14 domain maps to 138–431; the sequence is SYHTLEEIYS…MALRTIMEHT (294 aa). The Zn(2+) site is built by histidine 196 and glutamate 199. Residues 196 to 199, arginine 254, and 271 to 272 each bind substrate; these read HSRE and NR. An intrachain disulfide couples cysteine 265 to cysteine 288. Position 323 (histidine 323) interacts with Zn(2+). Substrate is bound by residues 324 to 325 and tyrosine 375; that span reads SY. The active-site Proton donor/acceptor is glutamate 397.

Belongs to the peptidase M14 family. It depends on Zn(2+) as a cofactor. As to expression, expression is very low or not detectable.

The protein resides in the secreted. This is Carboxypeptidase A5 (CPA5) from Homo sapiens (Human).